The chain runs to 763 residues: Phosphoglycerol transferase I (763 aa).

The next 4 helical transmembrane spans lie at 1 to 21, 26 to 46, 77 to 97, and 108 to 128; these read MSELLSFALFLASVLIYAWKA, WWFAATLTVLGLFVVLNITLF, ILPGIGIVLGLTAVFGALGWI, and FGYSLLALLLALGSVDASPAF.

The protein belongs to the OpgB family.

The protein localises to the cell inner membrane. The catalysed reaction is a phosphatidylglycerol + a membrane-derived-oligosaccharide D-glucose = a 1,2-diacyl-sn-glycerol + a membrane-derived-oligosaccharide 6-(glycerophospho)-D-glucose.. The protein operates within glycan metabolism; osmoregulated periplasmic glucan (OPG) biosynthesis. Its function is as follows. Transfers a phosphoglycerol residue from phosphatidylglycerol to the membrane-bound nascent glucan backbones. The chain is Phosphoglycerol transferase I from Escherichia coli O127:H6 (strain E2348/69 / EPEC).